Here is a 496-residue protein sequence, read N- to C-terminus: Fatty acyl-CoA reductase 8 (496 aa).

Belongs to the fatty acyl-CoA reductase family.

The catalysed reaction is a long-chain fatty acyl-CoA + 2 NADPH + 2 H(+) = a long-chain primary fatty alcohol + 2 NADP(+) + CoA. Catalyzes the reduction of fatty acyl-CoA to fatty alcohols. Catalyzes specifically the formation of C16:0 fatty alcohol. This is Fatty acyl-CoA reductase 8 (FAR8) from Arabidopsis thaliana (Mouse-ear cress).